Reading from the N-terminus, the 393-residue chain is Formate-dependent phosphoribosylglycinamide formyltransferase (393 aa).

N(1)-(5-phospho-beta-D-ribosyl)glycinamide is bound by residues 22 to 23 (EL) and E82. ATP contacts are provided by residues R114, K155, 160–165 (SSGKGQ), 195–198 (EGFI), and E203. In terms of domain architecture, ATP-grasp spans 119-308 (RLAAEELGLP…EFALHARAIL (190 aa)). E267 and E279 together coordinate Mg(2+). N(1)-(5-phospho-beta-D-ribosyl)glycinamide contacts are provided by residues D286, K356, and 363–364 (RR).

This sequence belongs to the PurK/PurT family. As to quaternary structure, homodimer.

It carries out the reaction N(1)-(5-phospho-beta-D-ribosyl)glycinamide + formate + ATP = N(2)-formyl-N(1)-(5-phospho-beta-D-ribosyl)glycinamide + ADP + phosphate + H(+). It participates in purine metabolism; IMP biosynthesis via de novo pathway; N(2)-formyl-N(1)-(5-phospho-D-ribosyl)glycinamide from N(1)-(5-phospho-D-ribosyl)glycinamide (formate route): step 1/1. Functionally, involved in the de novo purine biosynthesis. Catalyzes the transfer of formate to 5-phospho-ribosyl-glycinamide (GAR), producing 5-phospho-ribosyl-N-formylglycinamide (FGAR). Formate is provided by PurU via hydrolysis of 10-formyl-tetrahydrofolate. The polypeptide is Formate-dependent phosphoribosylglycinamide formyltransferase (Azotobacter vinelandii (strain DJ / ATCC BAA-1303)).